The primary structure comprises 359 residues: Cyclin puc1 (359 aa).

Belongs to the cyclin family.

Its function is as follows. Function in exit from the mitotic cycle. Contributes to negative regulation of the timing of sexual development in fission yeast, and functions at the transition between cycling and non-cycling cells. Interacts with protein kinase A. The chain is Cyclin puc1 (puc1) from Schizosaccharomyces pombe (strain 972 / ATCC 24843) (Fission yeast).